The sequence spans 600 residues: Zinc metalloproteinase-disintegrin-like stejnihagin-A (600 aa).

The signal sequence occupies residues 1-20; the sequence is MIEVLLVTICLAVFPYQGSS. A propeptide spanning residues 21 to 191 is cleaved from the precursor; the sequence is IILESGNVND…KASQLVVTAE (171 aa). Residue Gln192 is modified to Pyrrolidone carboxylic acid. The Peptidase M12B domain occupies 198 to 389; the sequence is RYVKLAIVAD…YNPQCILNAP (192 aa). Intrachain disulfides connect Cys306–Cys384, Cys346–Cys368, and Cys348–Cys351. The N-linked (GlcNAc...) asparagine glycan is linked to Asn317. His331 contributes to the Zn(2+) binding site. Glu332 is a catalytic residue. Zn(2+) contacts are provided by His335 and His341. Asn367 carries an N-linked (GlcNAc...) asparagine glycan. Residues 397-483 enclose the Disintegrin domain; the sequence is PPVCGNELLE…DCPTDDFHRN (87 aa). 6 residues coordinate Ca(2+): Val399, Asn402, Leu404, Glu406, Glu409, and Asp412. Intrachain disulfides connect Cys400-Cys429, Cys411-Cys424, Cys413-Cys419, Cys423-Cys446, Cys437-Cys443, Cys442-Cys468, Cys455-Cys475, Cys462-Cys494, Cys487-Cys499, Cys506-Cys556, Cys521-Cys565, Cys534-Cys544, Cys551-Cys587, and Cys581-Cys593. Residues 461–463 carry the D/ECD-tripeptide motif; that stretch reads ECD. N-linked (GlcNAc...) asparagine glycosylation is present at Asn568.

Belongs to the venom metalloproteinase (M12B) family. P-III subfamily. P-IIIa sub-subfamily. Monomer. The cofactor is Zn(2+). As to expression, expressed by the venom gland.

Its subcellular location is the secreted. In terms of biological role, this metalloproteinase-disintegrin-like impairs hemostasis in the envenomed animal. The protein is Zinc metalloproteinase-disintegrin-like stejnihagin-A of Trimeresurus stejnegeri (Chinese green tree viper).